A 506-amino-acid chain; its full sequence is Dolichyl pyrophosphate Glc1Man9GlcNAc2 alpha-1,3-glucosyltransferase (506 aa).

12 helical membrane passes run 10-30 (RLLLWFFAVATAVKLLLIPSS), 101-121 (VIYFQRISVIVSDLCLLYGVY), 133-153 (NLICALVIWSPGLLIVDHIHF), 176-196 (LLGGFLFAVLLCFKHLFAVTA), 219-239 (LVTIGAVVVAVFAAAYGPFIY), 261-281 (YWAPNFWVFYIILDKGLAVLL), 305-325 (PFAVLPQITPLTTFAMVLLAI), 339-359 (GLVARWVAYAYTCGFLFGWHV), 384-401 (HYFLVSIVSCYSLYPLLY), 406-426 (YPIKVLLLLLHSVVMWLGFAA), 454-474 (YLMGLIIVEIVSQFLHPYFLG), and 479-499 (FLPLMLISTYCTVGIMYSWIW).

It belongs to the ALG6/ALG8 glucosyltransferase family.

The protein resides in the endoplasmic reticulum membrane. The catalysed reaction is an alpha-D-Glc-(1-&gt;3)-alpha-D-Man-(1-&gt;2)-alpha-D-Man-(1-&gt;2)-alpha-D-Man-(1-&gt;3)-[alpha-D-Man-(1-&gt;2)-alpha-D-Man-(1-&gt;3)-[alpha-D-Man-(1-&gt;2)-alpha-D-Man-(1-&gt;6)]-alpha-D-Man-(1-&gt;6)]-beta-D-Man-(1-&gt;4)-beta-D-GlcNAc-(1-&gt;4)-alpha-D-GlcNAc-diphospho-di-trans,poly-cis-dolichol + a di-trans,poly-cis-dolichyl beta-D-glucosyl phosphate = an alpha-D-Glc-(1-&gt;3)-alpha-D-Glc-(1-&gt;3)-alpha-D-Man-(1-&gt;2)-alpha-D-Man-(1-&gt;2)-alpha-D-Man-(1-&gt;3)-[alpha-D-Man-(1-&gt;2)-alpha-D-Man-(1-&gt;3)-[alpha-D-Man-(1-&gt;2)-alpha-D-Man-(1-&gt;6)]-alpha-D-Man-(1-&gt;6)]-beta-D-Man-(1-&gt;4)-beta-D-GlcNAc-(1-&gt;4)-alpha-D-GlcNAc-diphospho-di-trans,poly-cis-dolichol + a di-trans,poly-cis-dolichyl phosphate + H(+). The protein operates within protein modification; protein glycosylation. In terms of biological role, dolichyl pyrophosphate Glc1Man9GlcNAc2 alpha-1,3-glucosyltransferase that operates in the biosynthetic pathway of dolichol-linked oligosaccharides, the glycan precursors employed in protein asparagine (N)-glycosylation. The assembly of dolichol-linked oligosaccharides begins on the cytosolic side of the endoplasmic reticulum membrane and finishes in its lumen. The sequential addition of sugars to dolichol pyrophosphate produces dolichol-linked oligosaccharides containing fourteen sugars, including two GlcNAcs, nine mannoses and three glucoses. Once assembled, the oligosaccharide is transferred from the lipid to nascent proteins by oligosaccharyltransferases. In the lumen of the endoplasmic reticulum, adds the second glucose residue from dolichyl phosphate glucose (Dol-P-Glc) onto the lipid-linked oligosaccharide intermediate Glc(1)Man(9)GlcNAc(2)-PP-Dol to produce Glc(2)Man(9)GlcNAc(2)-PP-Dol. The polypeptide is Dolichyl pyrophosphate Glc1Man9GlcNAc2 alpha-1,3-glucosyltransferase (Arabidopsis thaliana (Mouse-ear cress)).